The primary structure comprises 171 residues: Endoribonuclease YbeY (171 aa).

Zn(2+) is bound by residues H126, H130, and H136.

Belongs to the endoribonuclease YbeY family. It depends on Zn(2+) as a cofactor.

The protein resides in the cytoplasm. Single strand-specific metallo-endoribonuclease involved in late-stage 70S ribosome quality control and in maturation of the 3' terminus of the 16S rRNA. The sequence is that of Endoribonuclease YbeY from Rhizobium etli (strain ATCC 51251 / DSM 11541 / JCM 21823 / NBRC 15573 / CFN 42).